The sequence spans 105 residues: D-galactoside-specific lectin (105 aa).

Residues 13–103 (VCEDSSLTIS…KYLAVTYICS (91 aa)) enclose the SUEL-type lectin domain.

As to quaternary structure, homodimer; disulfide-linked.

Its subcellular location is the cytoplasm. In terms of biological role, this protein binds D-galactoside. May have an important role in the activation of eggs (triggered by fertilization), or in their subsequent differentiation. The dimeric form is essential for hemagglutination activity. This is D-galactoside-specific lectin from Heliocidaris crassispina (Sea urchin).